We begin with the raw amino-acid sequence, 339 residues long: Nucleoid-associated protein Asuc_0779 (339 aa).

The protein belongs to the YejK family.

The protein resides in the cytoplasm. It is found in the nucleoid. The protein is Nucleoid-associated protein Asuc_0779 of Actinobacillus succinogenes (strain ATCC 55618 / DSM 22257 / CCUG 43843 / 130Z).